We begin with the raw amino-acid sequence, 511 residues long: Mannosyl-oligosaccharide alpha-1,2-mannosidase (511 aa).

The first 35 residues, 1–35, serve as a signal peptide directing secretion; sequence MRLPVSFPLTVLSLLGSTIAHPYGETEAVLRSEPK. A glycan (N-linked (GlcNAc...) asparagine) is linked at Asn182. An intrachain disulfide couples Cys332 to Cys361. The N-linked (GlcNAc...) asparagine glycan is linked to Asn366. Asp375 serves as the catalytic Proton donor. An N-linked (GlcNAc...) asparagine glycan is attached at Asn438. Thr501 is a binding site for Ca(2+).

This sequence belongs to the glycosyl hydrolase 47 family. In terms of assembly, homodimer. Ca(2+) serves as cofactor.

The protein resides in the secreted. It carries out the reaction N(4)-(alpha-D-Man-(1-&gt;2)-alpha-D-Man-(1-&gt;2)-alpha-D-Man-(1-&gt;3)-[alpha-D-Man-(1-&gt;2)-alpha-D-Man-(1-&gt;3)-[alpha-D-Man-(1-&gt;2)-alpha-D-Man-(1-&gt;6)]-alpha-D-Man-(1-&gt;6)]-beta-D-Man-(1-&gt;4)-beta-D-GlcNAc-(1-&gt;4)-beta-D-GlcNAc)-L-asparaginyl-[protein] (N-glucan mannose isomer 9A1,2,3B1,2,3) + 4 H2O = N(4)-(alpha-D-Man-(1-&gt;3)-[alpha-D-Man-(1-&gt;3)-[alpha-D-Man-(1-&gt;6)]-alpha-D-Man-(1-&gt;6)]-beta-D-Man-(1-&gt;4)-beta-D-GlcNAc-(1-&gt;4)-beta-D-GlcNAc)-L-asparaginyl-[protein] (N-glucan mannose isomer 5A1,2) + 4 beta-D-mannose. It catalyses the reaction N(4)-(alpha-D-Man-(1-&gt;2)-alpha-D-Man-(1-&gt;2)-alpha-D-Man-(1-&gt;3)-[alpha-D-Man-(1-&gt;3)-[alpha-D-Man-(1-&gt;2)-alpha-D-Man-(1-&gt;6)]-alpha-D-Man-(1-&gt;6)]-beta-D-Man-(1-&gt;4)-beta-D-GlcNAc-(1-&gt;4)-beta-D-GlcNAc)-L-asparaginyl-[protein] (N-glucan mannose isomer 8A1,2,3B1,3) + 3 H2O = N(4)-(alpha-D-Man-(1-&gt;3)-[alpha-D-Man-(1-&gt;3)-[alpha-D-Man-(1-&gt;6)]-alpha-D-Man-(1-&gt;6)]-beta-D-Man-(1-&gt;4)-beta-D-GlcNAc-(1-&gt;4)-beta-D-GlcNAc)-L-asparaginyl-[protein] (N-glucan mannose isomer 5A1,2) + 3 beta-D-mannose. It participates in protein modification; protein glycosylation. Its function is as follows. Involved in the maturation of Asn-linked oligosaccharides. Progressively trim alpha-1,2-linked mannose residues from Man(9)GlcNAc(2) to produce Man(5)GlcNAc(2). In Penicillium citrinum, this protein is Mannosyl-oligosaccharide alpha-1,2-mannosidase (MSDC).